Reading from the N-terminus, the 134-residue chain is Retinol-binding protein 2 (134 aa).

Positions 41 and 109 each coordinate all-trans-retinol.

It belongs to the calycin superfamily. Fatty-acid binding protein (FABP) family.

Its subcellular location is the cytoplasm. Intracellular transport of retinol. This Sus scrofa (Pig) protein is Retinol-binding protein 2 (RBP2).